Here is a 211-residue protein sequence, read N- to C-terminus: Octanoyltransferase (211 aa).

The BPL/LPL catalytic domain occupies 32–207 (PCTYDEIWFV…ELSKFLEIFI (176 aa)). Residues 71-78 (RGGQITYH), 138-140 (SLG), and 151-153 (GLA) each bind substrate. Cys-169 (acyl-thioester intermediate) is an active-site residue.

It belongs to the LipB family.

Its subcellular location is the cytoplasm. The enzyme catalyses octanoyl-[ACP] + L-lysyl-[protein] = N(6)-octanoyl-L-lysyl-[protein] + holo-[ACP] + H(+). Its pathway is protein modification; protein lipoylation via endogenous pathway; protein N(6)-(lipoyl)lysine from octanoyl-[acyl-carrier-protein]: step 1/2. Its function is as follows. Catalyzes the transfer of endogenously produced octanoic acid from octanoyl-acyl-carrier-protein onto the lipoyl domains of lipoate-dependent enzymes. Lipoyl-ACP can also act as a substrate although octanoyl-ACP is likely to be the physiological substrate. The chain is Octanoyltransferase from Buchnera aphidicola subsp. Acyrthosiphon pisum (strain APS) (Acyrthosiphon pisum symbiotic bacterium).